The following is a 439-amino-acid chain: S-layer protein (439 aa).

The first 30 residues, 1 to 30, serve as a signal peptide directing secretion; it reads MKKNLRIVSAAAAALLAVAPIAATAMPVNA.

Glycosylated.

The protein resides in the secreted. The protein localises to the cell wall. It is found in the S-layer. Functionally, the S-layer is a paracrystalline mono-layered assembly of proteins which coat the surface of bacteria. This Lactobacillus helveticus (Lactobacillus suntoryeus) protein is S-layer protein (slpH).